The chain runs to 478 residues: Sulfate adenylyltransferase subunit 1 (478 aa).

The 217-residue stretch at 24-240 (KSLLRFLTCG…VLENVDIDAD (217 aa)) folds into the tr-type G domain. The interval 33 to 40 (GSVDDGKS) is G1. Residue 33-40 (GSVDDGKS) coordinates GTP. Positions 91-95 (GITID) are G2. Positions 112 to 115 (DTPG) are G3. GTP contacts are provided by residues 112–116 (DTPGH) and 167–170 (NKMD). The segment at 167–170 (NKMD) is G4. The G5 stretch occupies residues 206–208 (SAL).

The protein belongs to the TRAFAC class translation factor GTPase superfamily. Classic translation factor GTPase family. CysN/NodQ subfamily. Heterodimer composed of CysD, the smaller subunit, and CysN.

It carries out the reaction sulfate + ATP + H(+) = adenosine 5'-phosphosulfate + diphosphate. It functions in the pathway sulfur metabolism; hydrogen sulfide biosynthesis; sulfite from sulfate: step 1/3. Functionally, with CysD forms the ATP sulfurylase (ATPS) that catalyzes the adenylation of sulfate producing adenosine 5'-phosphosulfate (APS) and diphosphate, the first enzymatic step in sulfur assimilation pathway. APS synthesis involves the formation of a high-energy phosphoric-sulfuric acid anhydride bond driven by GTP hydrolysis by CysN coupled to ATP hydrolysis by CysD. This is Sulfate adenylyltransferase subunit 1 from Aliivibrio fischeri (strain ATCC 700601 / ES114) (Vibrio fischeri).